The following is a 1383-amino-acid chain: DNA-directed RNA polymerase subunit beta (1383 aa).

The protein belongs to the RNA polymerase beta chain family. The RNAP catalytic core consists of 2 alpha, 1 beta, 1 beta' and 1 omega subunit. When a sigma factor is associated with the core the holoenzyme is formed, which can initiate transcription.

The catalysed reaction is RNA(n) + a ribonucleoside 5'-triphosphate = RNA(n+1) + diphosphate. Its function is as follows. DNA-dependent RNA polymerase catalyzes the transcription of DNA into RNA using the four ribonucleoside triphosphates as substrates. This Xanthomonas axonopodis pv. citri (strain 306) protein is DNA-directed RNA polymerase subunit beta.